Consider the following 302-residue polypeptide: Troponin T, cardiac muscle isoforms (302 aa).

The span at 1 to 55 shows a compositional bias: acidic residues; the sequence is MSDSEEVVEEYEQEQEEEYVEEEEEEWLEEDDGQEDQVDEEEEETEETTAEEQED. 3 disordered regions span residues 1–99, 138–230, and 280–302; these read MSDS…GERL, KDRI…RKPL, and SDHQ…GRWK. An N-acetylserine modification is found at S2. S2 carries the post-translational modification Phosphoserine; by CK2. The segment covering 65 to 79 has biased composition (basic and acidic residues); sequence EGDREQEPGEGESKP. Residues 82-93 show a composition bias toward pro residues; sequence KPFMPNLVPPKI. 2 stretches are compositionally biased toward basic and acidic residues: residues 138 to 186 and 204 to 230; these read KDRI…EKEA and KSEK…RKPL.

It belongs to the troponin T family.

Functionally, troponin T is the tropomyosin-binding subunit of troponin, the thin filament regulatory complex which confers calcium-sensitivity to striated muscle actomyosin ATPase activity. This chain is Troponin T, cardiac muscle isoforms (TNNT2), found in Gallus gallus (Chicken).